Reading from the N-terminus, the 750-residue chain is Polyribonucleotide nucleotidyltransferase (750 aa).

Mg(2+)-binding residues include Asp523 and Asp529. Residues 589 to 648 (PRVTSISIPVDKIGEVIGPKGKMINSITEETGAEITIEDDGTIYVGAADGPSAEAAIDKI) form the KH domain. Positions 660–729 (GERFLGTVVK…SRGKISLVVV (70 aa)) constitute an S1 motif domain.

Belongs to the polyribonucleotide nucleotidyltransferase family. It depends on Mg(2+) as a cofactor.

The protein localises to the cytoplasm. The enzyme catalyses RNA(n+1) + phosphate = RNA(n) + a ribonucleoside 5'-diphosphate. In terms of biological role, involved in mRNA degradation. Catalyzes the phosphorolysis of single-stranded polyribonucleotides processively in the 3'- to 5'-direction. This is Polyribonucleotide nucleotidyltransferase from Saccharopolyspora erythraea (strain ATCC 11635 / DSM 40517 / JCM 4748 / NBRC 13426 / NCIMB 8594 / NRRL 2338).